The primary structure comprises 733 residues: Phosphoribosylformylglycinamidine synthase subunit PurL (733 aa).

Histidine 41 is a catalytic residue. The ATP site is built by tyrosine 44 and lysine 83. Glutamate 85 serves as a coordination point for Mg(2+). Substrate contacts are provided by residues 86–89 (SHNH) and arginine 108. Histidine 87 (proton acceptor) is an active-site residue. Residue aspartate 109 participates in Mg(2+) binding. Residues 212 to 232 (GASFASQELSEESEEKRPSVQ) form a disordered region. Glutamine 232 is a substrate binding site. Mg(2+) is bound at residue aspartate 260. 304–306 (ESQ) contributes to the substrate binding site. ATP is bound by residues aspartate 488 and glycine 525. Mg(2+) is bound at residue asparagine 526. Substrate is bound at residue serine 528.

The protein belongs to the FGAMS family. In terms of assembly, monomer. Part of the FGAM synthase complex composed of 1 PurL, 1 PurQ and 2 PurS subunits.

The protein localises to the cytoplasm. The catalysed reaction is N(2)-formyl-N(1)-(5-phospho-beta-D-ribosyl)glycinamide + L-glutamine + ATP + H2O = 2-formamido-N(1)-(5-O-phospho-beta-D-ribosyl)acetamidine + L-glutamate + ADP + phosphate + H(+). It participates in purine metabolism; IMP biosynthesis via de novo pathway; 5-amino-1-(5-phospho-D-ribosyl)imidazole from N(2)-formyl-N(1)-(5-phospho-D-ribosyl)glycinamide: step 1/2. Its function is as follows. Part of the phosphoribosylformylglycinamidine synthase complex involved in the purines biosynthetic pathway. Catalyzes the ATP-dependent conversion of formylglycinamide ribonucleotide (FGAR) and glutamine to yield formylglycinamidine ribonucleotide (FGAM) and glutamate. The FGAM synthase complex is composed of three subunits. PurQ produces an ammonia molecule by converting glutamine to glutamate. PurL transfers the ammonia molecule to FGAR to form FGAM in an ATP-dependent manner. PurS interacts with PurQ and PurL and is thought to assist in the transfer of the ammonia molecule from PurQ to PurL. This Thermoanaerobacter pseudethanolicus (strain ATCC 33223 / 39E) (Clostridium thermohydrosulfuricum) protein is Phosphoribosylformylglycinamidine synthase subunit PurL.